A 319-amino-acid chain; its full sequence is Extracellular phospholipase A1 (319 aa).

The first 24 residues, 1–24, serve as a signal peptide directing secretion; the sequence is MSMPLSFTSAVSPVAAIPTPRAAA.

The catalysed reaction is a 1,2-diacyl-sn-glycero-3-phosphocholine + H2O = a 2-acyl-sn-glycero-3-phosphocholine + a fatty acid + H(+). The chain is Extracellular phospholipase A1 (phlA) from Serratia liquefaciens.